Here is a 520-residue protein sequence, read N- to C-terminus: MTKFSEFGLDEKIVKSVNRMGFEEATPIQEKTIPLGLEGKDLIGQAQTGTGKTAAFGLPMIHKIDQKSNNVQALIIAPTRELAIQVSEELYKLSYDKHVRVLAVYGGSDISRQIRSLKKNPQIVVGTPGRILDHINRRTLKLDHVETLVLDEADEMLNMGFIDDIETILKEVPAERQTLLFSATMPDPIRRIGERFMHSPELIRIKAKEMTALLIEQFFVKVHEKEKFDVLSRLLDVQAPELAIVFGRTKRRVDELSRALDMRGYVAEGIHGDLTQAKRMSVLRKFKEGKIDVLVATDVAARGLDISGVTHVYNYDIPQDPESYVHRIGRTGRAGKEGMAITFVQPREMGYLRIVEETTKKRMQPLQAPTWDEAFAGQLRVATEKIQEAITEENLADYKTFANELLEKYDATDIAAAMLKMLAKEPDKTPVHITEERPLPSRGGGGYKGKNGKGGKGGGYRGGSGKGGSYRDRNNSGKGRRSGGGSGGGSGSGGGGNRDRRGGGEQRSGGNKGNYSQKSK.

Residues 2-30 carry the Q motif motif; it reads TKFSEFGLDEKIVKSVNRMGFEEATPIQE. Residues 33 to 203 enclose the Helicase ATP-binding domain; that stretch reads IPLGLEGKDL…ERFMHSPELI (171 aa). 46–53 is an ATP binding site; that stretch reads AQTGTGKT. The short motif at 151 to 154 is the DEAD box element; it reads DEAD. Residues 214-374 form the Helicase C-terminal domain; that stretch reads LIEQFFVKVH…PLQAPTWDEA (161 aa). Positions 428–439 are enriched in basic and acidic residues; the sequence is KTPVHITEERPL. The interval 428–520 is disordered; it reads KTPVHITEER…NKGNYSQKSK (93 aa). Gly residues-rich tracts occupy residues 442-468 and 482-496; these read RGGG…GKGG and SGGG…GGGG.

This sequence belongs to the DEAD box helicase family. CshA subfamily. As to quaternary structure, oligomerizes, may be a member of the RNA degradosome.

The protein resides in the cytoplasm. It catalyses the reaction ATP + H2O = ADP + phosphate + H(+). Functionally, DEAD-box RNA helicase possibly involved in RNA degradation. Unwinds dsRNA in both 5'- and 3'-directions, has RNA-dependent ATPase activity. Involved in cold tolerance, motility and alcohol tolerance. In Listeria monocytogenes serovar 1/2a (strain ATCC BAA-679 / EGD-e), this protein is ATP-dependent RNA helicase CshA.